A 76-amino-acid chain; its full sequence is SAGKFIVIFKNGVSDDKIRETKDEVIAEGGTITNEYNMPGMKGFAGELTPQSLTKFQGLQGDLIDSIEEDGIVTTQ.

An N-acetylserine modification is found at serine 1.

The protein belongs to the protease inhibitor I9 family.

Its function is as follows. Specifically inhibits an intracellular serine proteinase (proteinase A). This is Serine proteinase inhibitor IA-2 from Pleurotus ostreatus (Oyster mushroom).